A 393-amino-acid polypeptide reads, in one-letter code: S-adenosylmethionine synthase 2 (393 aa).

Residue Glu9 participates in Mg(2+) binding. ATP is bound at residue His15. Glu43 contacts K(+). L-methionine is bound by residues Glu56 and Gln99. Residues 167-169, 235-238, Asp246, 252-253, Ala269, Lys273, and Lys277 contribute to the ATP site; these read DGK, SGRF, and RM. Position 246 (Asp246) interacts with L-methionine. L-methionine is bound at residue Lys277.

It belongs to the AdoMet synthase family. As to quaternary structure, homotetramer. Mn(2+) is required as a cofactor. Requires Mg(2+) as cofactor. The cofactor is Co(2+). It depends on K(+) as a cofactor.

It localises to the cytoplasm. The catalysed reaction is L-methionine + ATP + H2O = S-adenosyl-L-methionine + phosphate + diphosphate. It participates in amino-acid biosynthesis; S-adenosyl-L-methionine biosynthesis; S-adenosyl-L-methionine from L-methionine: step 1/1. Functionally, catalyzes the formation of S-adenosylmethionine from methionine and ATP. The reaction comprises two steps that are both catalyzed by the same enzyme: formation of S-adenosylmethionine (AdoMet) and triphosphate, and subsequent hydrolysis of the triphosphate. This is S-adenosylmethionine synthase 2 (SAMS2) from Daucus carota (Wild carrot).